The primary structure comprises 443 residues: Tol-Pal system protein TolB (443 aa).

The signal sequence occupies residues M1 to A33.

Belongs to the TolB family. In terms of assembly, the Tol-Pal system is composed of five core proteins: the inner membrane proteins TolA, TolQ and TolR, the periplasmic protein TolB and the outer membrane protein Pal. They form a network linking the inner and outer membranes and the peptidoglycan layer.

It is found in the periplasm. Part of the Tol-Pal system, which plays a role in outer membrane invagination during cell division and is important for maintaining outer membrane integrity. The protein is Tol-Pal system protein TolB of Brucella canis (strain ATCC 23365 / NCTC 10854 / RM-666).